The following is a 740-amino-acid chain: Arf-GAP with coiled-coil, ANK repeat and PH domain-containing protein 1 (740 aa).

Residues 1–226 enclose the BAR domain; it reads MTVKLDFEEC…RKELGAQLHQ (226 aa). The segment at 1-382 is required for formation of endosomal tubules when overexpressed with PIP5K1C; that stretch reads MTVKLDFEEC…RGPGQGSGHL (382 aa). The PH domain occupies 265-360; it reads GLVMEGHLFK…WVSAVQSSIA (96 aa). Positions 405–527 constitute an Arf-GAP domain; that stretch reads GHVVAQVQSV…KFLTKLPEIR (123 aa). Residues 405–740 are required for interaction with GULP1; the sequence is GHVVAQVQSV…SRRSHDLHTL (336 aa). Residues 420 to 443 form a C4-type zinc finger; sequence CCDCREPAPEWASINLGVTLCIQC. Tyr485 bears the 3'-nitrotyrosine mark. Residues 525-566 are prevents interaction with ITGB1 when S-554 is not phosphorylated; sequence EIRGRRGGRGRPRGQPPVPPKPSIRPRPGSLRSKPEPPSEDL. Residues 525–581 form a disordered region; the sequence is EIRGRRGGRGRPRGQPPVPPKPSIRPRPGSLRSKPEPPSEDLGSLHPGALLFRASGH. The span at 538 to 549 shows a compositional bias: pro residues; that stretch reads GQPPVPPKPSIR. Ser554 is subject to Phosphoserine; by PKB. 3 ANK repeats span residues 606–635, 639–668, and 672–702; these read DNAT…NVNQ, AGRG…DLGA, and EGRD…EAEA.

In terms of assembly, banana-shaped homodimer laterally assembling into tetramers, the tetramers further pack helically onto the membrane. Interacts with GTP-bound ARF6. Interacts with third cytoplasmic loop of SLC2A4/GLUT4. Interacts with CLTC. Interacts with GULP1. Forms a complex with GDP-bound ARF6 and GULP1. Interacts with ITGB1; required for ITGB1 recycling. Phosphorylation at Ser-554 by PKB is required for interaction with ITGB1, export of ITGB1 from recycling endosomes to the cell surface and ITGB1-dependent cell migration. As to expression, highest level in lung and spleen. Low level in heart, kidney, liver and pancreas.

The protein resides in the recycling endosome membrane. GAP activity stimulated by phosphatidylinositol 4,5-bisphosphate (PIP2) and phosphatidic acid. Its function is as follows. GTPase-activating protein (GAP) for ADP ribosylation factor 6 (ARF6) required for clathrin-dependent export of proteins from recycling endosomes to trans-Golgi network and cell surface. Required for regulated export of ITGB1 from recycling endosomes to the cell surface and ITGB1-dependent cell migration. The polypeptide is Arf-GAP with coiled-coil, ANK repeat and PH domain-containing protein 1 (ACAP1) (Homo sapiens (Human)).